The sequence spans 231 residues: Ribose-5-phosphate isomerase A (231 aa).

Substrate contacts are provided by residues 28 to 31 (TGST), 83 to 86 (DGAD), and 96 to 99 (KGGG). Glu105 serves as the catalytic Proton acceptor. Position 123 (Lys123) interacts with substrate.

Belongs to the ribose 5-phosphate isomerase family. Homodimer.

It catalyses the reaction aldehydo-D-ribose 5-phosphate = D-ribulose 5-phosphate. The protein operates within carbohydrate degradation; pentose phosphate pathway; D-ribose 5-phosphate from D-ribulose 5-phosphate (non-oxidative stage): step 1/1. Its function is as follows. Catalyzes the reversible conversion of ribose-5-phosphate to ribulose 5-phosphate. This is Ribose-5-phosphate isomerase A from Parvibaculum lavamentivorans (strain DS-1 / DSM 13023 / NCIMB 13966).